A 444-amino-acid polypeptide reads, in one-letter code: Deoxyguanosinetriphosphate triphosphohydrolase-like protein (444 aa).

An HD domain is found at R59–A250.

It belongs to the dGTPase family. Type 2 subfamily.

In Shewanella halifaxensis (strain HAW-EB4), this protein is Deoxyguanosinetriphosphate triphosphohydrolase-like protein.